Here is a 44-residue protein sequence, read N- to C-terminus: Omega-plectoxin-Pt1a (44 aa).

5 cysteine pairs are disulfide-bonded: Cys3/Cys17, Cys10/Cys23, Cys16/Cys35, Cys20/Cys42, and Cys25/Cys33. At Thr44 the chain carries Threonine amide. Thr44 is lipidated: O-palmitoyl threonine.

This sequence belongs to the neurotoxin 02 (plectoxin) family. 02 (plectoxin) subfamily. In terms of processing, contains 5 disulfide bonds. Post-translationally, acylation by palmitate is required for biological activity. As to expression, expressed by the venom gland.

The protein resides in the secreted. Its function is as follows. Toxin that inhibits presynaptic voltage-gated calcium channel (Cav) in Drosophila nerve terminals, most likely through specific block of the Cav2 channel (known as Dmca1A). This Plectreurys tristis (Spider) protein is Omega-plectoxin-Pt1a.